Consider the following 501-residue polypeptide: TGF-beta receptor type-1 (501 aa).

The N-terminal stretch at 1–29 (MEAASAALRRCLLLIVLVAAATLLPGAKA) is a signal peptide. Residues 30 to 124 (LQCFCHLCTK…QSAGLGPVEL (95 aa)) lie on the Extracellular side of the membrane. Cystine bridges form between Cys-32-Cys-50, Cys-34-Cys-37, Cys-44-Cys-67, Cys-82-Cys-94, and Cys-95-Cys-100. A glycan (N-linked (GlcNAc...) asparagine) is linked at Asn-41. Residues 125-145 (AAVIAGPVCFVCIALMLMVYI) form a helical membrane-spanning segment. Residues 146–501 (CHNRTVIHHR…QLSQQEGIKM (356 aa)) lie on the Cytoplasmic side of the membrane. The residue at position 163 (Ser-163) is a Phosphoserine. A GS domain is found at 173 to 202 (TTLKDLIYDMTTSGSGSGLPLLVQRTIART). A phosphothreonine; by TGFBR2 mark is found at Thr-183 and Thr-184. Phosphoserine; by TGFBR2 occurs at positions 185, 187, and 189. An FKBP1A-binding motif is present at residues 191 to 192 (LP). Residues 203 to 493 (IVLQESIGKG…LRIKKTLSQL (291 aa)) form the Protein kinase domain. ATP is bound by residues 209–217 (IGKGRFGEV) and Lys-230. The active-site Proton acceptor is Asp-331. A Glycyl lysine isopeptide (Lys-Gly) (interchain with G-Cter in SUMO) cross-link involves residue Lys-389.

Belongs to the protein kinase superfamily. TKL Ser/Thr protein kinase family. TGFB receptor subfamily. Homodimer; in the endoplasmic reticulum but also at the cell membrane. Heterohexamer; TGFB1, TGFB2 and TGFB3 homodimeric ligands assemble a functional receptor composed of two TGFBR1 and TGFBR2 heterodimers to form a ligand-receptor heterohexamer. The respective affinity of TGBRB1 and TGFBR2 for the ligands may modulate the kinetics of assembly of the receptor and may explain the different biological activities of TGFB1, TGFB2 and TGFB3. Component of a complex composed of TSC22D1 (via N-terminus), TGFBR1 and TGFBR2; the interaction between TSC22D1 and TGFBR1 is inhibited by SMAD7 and promoted by TGFB1. Interacts with CD109; inhibits TGF-beta receptor activation in keratinocytes. Interacts with RBPMS. Interacts with SMAD2, SMAD3 and ZFYVE9; ZFYVE9 recruits SMAD2 and SMAD3 to the TGF-beta receptor. Interacts with TRAF6 and MAP3K7; induces MAP3K7 activation by TRAF6. Interacts with PARD6A; involved in TGF-beta induced epithelial to mesenchymal transition. Interacts with NEDD4L. Interacts with SMAD7, SMURF1 and SMURF2; SMAD7 recruits NEDD4L, SMURF1 and SMURF2 to the TGF-beta receptor. Interacts with USP15 and VPS39. Interacts (unphosphorylated) with FKBP1A; prevents TGFBR1 phosphorylation by TGFBR2 and stabilizes it in the inactive conformation. Interacts with SDCBP (via C-terminus). Interacts with CAV1 and this interaction is impaired in the presence of SDCBP. Interacts with APPL1; interaction is TGF beta dependent; mediates trafficking of the TGFBR1 from the endosomes to the nucleus via microtubules in a TRAF6-dependent manner. Interacts with GPR50; this interaction promotes the constitutive activation of SMAD signaling pathway. The cofactor is Mg(2+). Requires Mn(2+) as cofactor. Post-translationally, phosphorylated at basal levels in the absence of ligand. Activated upon phosphorylation by TGFBR2, mainly in the GS domain. Phosphorylation in the GS domain abrogates FKBP1A-binding. N-Glycosylated. In terms of processing, ubiquitinated; undergoes ubiquitination catalyzed by several E3 ubiquitin ligases including SMURF1, SMURF2 and NEDD4L2. Results in the proteasomal and/or lysosomal degradation of the receptor thereby negatively regulating its activity. Deubiquitinated by USP15, leading to stabilization of the protein and enhanced TGF-beta signal. Its ubiquitination and proteasome-mediated degradation is negatively regulated by SDCBP. As to expression, urogenital ridge, testis, ovary, brain and lungs.

The protein localises to the cell membrane. Its subcellular location is the cell junction. It localises to the tight junction. It is found in the membrane raft. The protein resides in the cell surface. It carries out the reaction L-threonyl-[receptor-protein] + ATP = O-phospho-L-threonyl-[receptor-protein] + ADP + H(+). The catalysed reaction is L-seryl-[receptor-protein] + ATP = O-phospho-L-seryl-[receptor-protein] + ADP + H(+). Its activity is regulated as follows. Kept in an inactive conformation by FKBP1A preventing receptor activation in absence of ligand. CD109 is another inhibitor of the receptor. Transmembrane serine/threonine kinase forming with the TGF-beta type II serine/threonine kinase receptor, TGFBR2, the non-promiscuous receptor for the TGF-beta cytokines TGFB1, TGFB2 and TGFB3. Transduces the TGFB1, TGFB2 and TGFB3 signal from the cell surface to the cytoplasm and is thus regulating a plethora of physiological and pathological processes including cell cycle arrest in epithelial and hematopoietic cells, control of mesenchymal cell proliferation and differentiation, wound healing, extracellular matrix production, immunosuppression and carcinogenesis. The formation of the receptor complex composed of 2 TGFBR1 and 2 TGFBR2 molecules symmetrically bound to the cytokine dimer results in the phosphorylation and the activation of TGFBR1 by the constitutively active TGFBR2. Activated TGFBR1 phosphorylates SMAD2 which dissociates from the receptor and interacts with SMAD4. The SMAD2-SMAD4 complex is subsequently translocated to the nucleus where it modulates the transcription of the TGF-beta-regulated genes. This constitutes the canonical SMAD-dependent TGF-beta signaling cascade. Also involved in non-canonical, SMAD-independent TGF-beta signaling pathways. For instance, TGFBR1 induces TRAF6 autoubiquitination which in turn results in MAP3K7 ubiquitination and activation to trigger apoptosis. Also regulates epithelial to mesenchymal transition through a SMAD-independent signaling pathway through PARD6A phosphorylation and activation. This chain is TGF-beta receptor type-1 (Tgfbr1), found in Rattus norvegicus (Rat).